Here is a 277-residue protein sequence, read N- to C-terminus: Large ribosomal subunit protein uL2m (277 aa).

A disordered region spans residues 225-263 (AMNPVDHPHGGGEGKTSGGRPSVTPWSWPTKGQPTRSKR). Positions 248–259 (TPWSWPTKGQPT) are enriched in polar residues.

This sequence belongs to the universal ribosomal protein uL2 family.

It localises to the mitochondrion. The sequence is that of Large ribosomal subunit protein uL2m (RPL2) from Reclinomonas americana.